The chain runs to 883 residues: Kinesin-like protein 5 (883 aa).

The Kinesin motor domain maps to 6–390 (SITVTVRVRP…LKYANRAKNI (385 aa)). 144-151 (GATGCGKT) contributes to the ATP binding site. Coiled coils occupy residues 396–435 (RNMI…SSQS) and 563–588 (LQDE…VDEF). Positions 755–785 (VSPMLEDKPEPGLLIKSPLEKKQEVNSESTQ) are disordered.

The protein belongs to the TRAFAC class myosin-kinesin ATPase superfamily. Kinesin family. Kinesin II subfamily. As to quaternary structure, heterodimer with klp6.

The protein localises to the cytoplasm. It localises to the cytoskeleton. It is found in the chromosome. Its subcellular location is the centromere. The protein resides in the kinetochore. The protein localises to the spindle. Its function is as follows. Has a role in establishing metaphase during mitosis. Required for chromosome segregation where it generates tension during kinetochore capturing. In Schizosaccharomyces pombe (strain 972 / ATCC 24843) (Fission yeast), this protein is Kinesin-like protein 5 (klp5).